Here is an 886-residue protein sequence, read N- to C-terminus: DNA gyrase subunit A (886 aa).

The Topo IIA-type catalytic domain maps to 35–501; the sequence is LPDVRDGLKP…GFEDLEDEDL (467 aa). The active-site O-(5'-phospho-DNA)-tyrosine intermediate is Y123. Positions 528-534 match the GyrA-box motif; the sequence is QNRGGRG. Positions 810 to 860 are disordered; sequence VKEDADEENEDEQSTVSEDGTEQQREAVVNDETPGNAIHTEVIDSEVNDED. Residues 813-822 are compositionally biased toward acidic residues; it reads DADEENEDEQ.

The protein belongs to the type II topoisomerase GyrA/ParC subunit family. Heterotetramer, composed of two GyrA and two GyrB chains. In the heterotetramer, GyrA contains the active site tyrosine that forms a transient covalent intermediate with DNA, while GyrB binds cofactors and catalyzes ATP hydrolysis.

It localises to the cytoplasm. It carries out the reaction ATP-dependent breakage, passage and rejoining of double-stranded DNA.. A type II topoisomerase that negatively supercoils closed circular double-stranded (ds) DNA in an ATP-dependent manner to modulate DNA topology and maintain chromosomes in an underwound state. Negative supercoiling favors strand separation, and DNA replication, transcription, recombination and repair, all of which involve strand separation. Also able to catalyze the interconversion of other topological isomers of dsDNA rings, including catenanes and knotted rings. Type II topoisomerases break and join 2 DNA strands simultaneously in an ATP-dependent manner. This Staphylococcus aureus (strain MRSA252) protein is DNA gyrase subunit A.